A 254-amino-acid polypeptide reads, in one-letter code: 2,3-bisphosphoglycerate-dependent phosphoglycerate mutase (254 aa).

Substrate-binding positions include 15-22 (RHGQSEWN), 28-29 (TG), R67, 94-97 (ERHY), K105, 121-122 (RR), and 188-189 (GN). Catalysis depends on H16, which acts as the Tele-phosphohistidine intermediate. Residue E94 is the Proton donor/acceptor of the active site.

The protein belongs to the phosphoglycerate mutase family. BPG-dependent PGAM subfamily.

The catalysed reaction is (2R)-2-phosphoglycerate = (2R)-3-phosphoglycerate. It participates in carbohydrate degradation; glycolysis; pyruvate from D-glyceraldehyde 3-phosphate: step 3/5. In terms of biological role, catalyzes the interconversion of 2-phosphoglycerate and 3-phosphoglycerate. In Corynebacterium jeikeium (strain K411), this protein is 2,3-bisphosphoglycerate-dependent phosphoglycerate mutase.